The following is a 1030-amino-acid chain: Zinc finger and SCAN domain-containing protein 20 (1030 aa).

The tract at residues 22–42 is disordered; sequence DSWGSDSRPEKESHSPVPGPE. In terms of domain architecture, SCAN box spans 45–127; sequence RRCFRQFRYR…ALVEDWHREA (83 aa). Disordered regions lie at residues 178–201, 213–285, 411–441, and 578–600; these read DLSK…PTVP, GKSQ…DSAQ, SGGP…WEPE, and TGLP…GEME. The span at 225-240 shows a compositional bias: basic and acidic residues; it reads AKKEPCQDPAGGDRGD. Composition is skewed to acidic residues over residues 426-441 and 589-600; these read SDTE…WEPE and EADDQEAWGEME. The C2H2-type 1; degenerate zinc-finger motif lies at 697-719; it reads YGCDTRAKSFSRKVHFFAPQRTH. The C2H2-type 2; degenerate zinc-finger motif lies at 725-747; the sequence is YKCLGSGKSFSDRANLSTHQRIH. 2 consecutive C2H2-type zinc fingers follow at residues 753–775 and 781–803; these read YRCL…QRTH and YKCG…QRVH. 2 disordered regions span residues 801-820 and 828-850; these read RVHL…NFGQ and WRRN…ADSP. C2H2-type zinc fingers lie at residues 862–884, 890–912, 918–940, 946–968, 974–996, and 1002–1024; these read YSCP…QRIH, YECA…RRTH, HKCA…QRVH, YECP…QRIH, YKCR…QRIH, and YKCT…RRTH.

The protein belongs to the krueppel C2H2-type zinc-finger protein family.

The protein resides in the nucleus. May be involved in transcriptional regulation. In Mus musculus (Mouse), this protein is Zinc finger and SCAN domain-containing protein 20 (Zscan20).